A 422-amino-acid chain; its full sequence is Vitamin D3 receptor (422 aa).

Positions 22–90 (PRICGVCGDK…RLKRCVDIGM (69 aa)) form a DNA-binding region, nuclear receptor. 8 residues coordinate Zn(2+): Cys-25, Cys-28, Cys-42, Cys-45, Cys-61, Cys-67, Cys-77, and Cys-80. 2 consecutive NR C4-type zinc fingers follow at residues 25–45 (CGVCGDKATGFHFNAMTCEGC) and 61–85 (CPFNGDCRITKDNRRHCQSCRLKRC). Residues 98–127 (DEEVQRKRQMINKRKSEEALKESMRPKISD) are hinge. Residues 128–418 (EQQKMIDILL…LTPLMLEVFS (291 aa)) enclose the NR LBD domain. Residues 170-191 (RSSSVHTQGSPSEDSDVFTSSP) form a disordered region. Calcitriol is bound at residue Ser-232. The interaction with coactivator LXXLL motif stretch occupies residues 241–259 (KMIPGFRDLIAEDQIALLK). Residues Arg-269, Ser-273, His-300, and His-392 each coordinate calcitriol. Positions 411 to 419 (PLMLEVFSD) match the 9aaTAD motif.

This sequence belongs to the nuclear hormone receptor family. NR1 subfamily. As to quaternary structure, homodimer in the absence of bound vitamin D3. Heterodimer with RXRA after vitamin D3 binding. As to expression, detected in all tissues examined. Highest level in small intestine and skin.

The protein resides in the nucleus. Its subcellular location is the cytoplasm. Nuclear receptor for calcitriol, the active form of vitamin D3 which mediates the action of this vitamin on cells. Enters the nucleus upon vitamin D3 binding where it forms heterodimers with the retinoid X receptor/RXR. The VDR-RXR heterodimers bind to specific response elements on DNA and activate the transcription of vitamin D3-responsive target genes. Plays a central role in calcium homeostasis. Also functions as a receptor for the secondary bile acid lithocholic acid (LCA) and its metabolites. This Xenopus laevis (African clawed frog) protein is Vitamin D3 receptor (vdr).